A 378-amino-acid chain; its full sequence is Putative F-box protein At4g17565 (378 aa).

Positions 16–63 (PKWSELCPDLLRSIFEQLSFTNLNRAKLVCRSWNSASRGCVPKRNQIP) constitute an F-box domain.

This Arabidopsis thaliana (Mouse-ear cress) protein is Putative F-box protein At4g17565.